The following is a 357-amino-acid chain: Gas vesicle ATPase GvpN (357 aa).

Over residues 22–36 (ATSASKNGGRTTPSA) the composition is skewed to polar residues. A disordered region spans residues 22-43 (ATSASKNGGRTTPSALTPRPRS). ATP is bound at residue 72-79 (GPAGTGKT).

This sequence belongs to the CbbQ/NirQ/NorQ/GpvN family. In terms of assembly, forms homodimers, probably interacts with other GV proteins including GvpA.

It localises to the gas vesicle. It is found in the cytoplasm. The catalysed reaction is ATP + H2O = ADP + phosphate + H(+). Its function is as follows. An ATPase that functions in gas vesicle formation. A minor component of the gas vesicle, also found in soluble extracts. Gas vesicles (GV) are hollow, gas filled proteinaceous nanostructures. During planktonic growth they allow positioning of the organism at a favorable depth for light or nutrient acquisition. The sequence is that of Gas vesicle ATPase GvpN from Ancylobacter aquaticus.